Consider the following 345-residue polypeptide: Succinylglutamate desuccinylase (345 aa).

Zn(2+) contacts are provided by H64, E67, and H161. E225 is a catalytic residue.

The protein belongs to the AspA/AstE family. Succinylglutamate desuccinylase subfamily. The cofactor is Zn(2+).

The catalysed reaction is N-succinyl-L-glutamate + H2O = L-glutamate + succinate. The protein operates within amino-acid degradation; L-arginine degradation via AST pathway; L-glutamate and succinate from L-arginine: step 5/5. Functionally, transforms N(2)-succinylglutamate into succinate and glutamate. The sequence is that of Succinylglutamate desuccinylase from Shewanella pealeana (strain ATCC 700345 / ANG-SQ1).